The sequence spans 356 residues: Protein MGF 360-10L (356 aa).

Residues 58 to 90 form an ANK repeat; that stretch reads DLNTALMIAAKENNYQLIKLFTEWGANINYGYI. Asn125 carries N-linked (GlcNAc...) asparagine; by host glycosylation. 2 consecutive transmembrane segments (helical) span residues 206 to 228 and 249 to 271; these read LNTW…YLYE and NFLT…LAAI. Asn352 carries an N-linked (GlcNAc...) asparagine; by host glycan.

This sequence belongs to the asfivirus MGF 360 family.

The protein localises to the host membrane. In terms of biological role, plays a role in virus cell tropism, and may be required for efficient virus replication in macrophages. The chain is Protein MGF 360-10L from Ornithodoros (relapsing fever ticks).